The following is a 106-amino-acid chain: UPF0122 protein Exig_1902 (106 aa).

The protein belongs to the UPF0122 family.

In terms of biological role, might take part in the signal recognition particle (SRP) pathway. This is inferred from the conservation of its genetic proximity to ftsY/ffh. May be a regulatory protein. This chain is UPF0122 protein Exig_1902, found in Exiguobacterium sibiricum (strain DSM 17290 / CCUG 55495 / CIP 109462 / JCM 13490 / 255-15).